Reading from the N-terminus, the 175-residue chain is 6,7-dimethyl-8-ribityllumazine synthase (175 aa).

Residues phenylalanine 24, 58–60 (ALE), and 82–84 (AVI) contribute to the 5-amino-6-(D-ribitylamino)uracil site. 87 to 88 (ET) contributes to the (2S)-2-hydroxy-3-oxobutyl phosphate binding site. Histidine 90 acts as the Proton donor in catalysis. Asparagine 115 provides a ligand contact to 5-amino-6-(D-ribitylamino)uracil. Arginine 129 is a (2S)-2-hydroxy-3-oxobutyl phosphate binding site. Residues 150–175 (ALEPEEDDEDEDDEDEDFDDEEDDGR) form a disordered region. Over residues 152–175 (EPEEDDEDEDDEDEDFDDEEDDGR) the composition is skewed to acidic residues.

Belongs to the DMRL synthase family.

It catalyses the reaction (2S)-2-hydroxy-3-oxobutyl phosphate + 5-amino-6-(D-ribitylamino)uracil = 6,7-dimethyl-8-(1-D-ribityl)lumazine + phosphate + 2 H2O + H(+). It functions in the pathway cofactor biosynthesis; riboflavin biosynthesis; riboflavin from 2-hydroxy-3-oxobutyl phosphate and 5-amino-6-(D-ribitylamino)uracil: step 1/2. In terms of biological role, catalyzes the formation of 6,7-dimethyl-8-ribityllumazine by condensation of 5-amino-6-(D-ribitylamino)uracil with 3,4-dihydroxy-2-butanone 4-phosphate. This is the penultimate step in the biosynthesis of riboflavin. This Bordetella bronchiseptica (strain ATCC BAA-588 / NCTC 13252 / RB50) (Alcaligenes bronchisepticus) protein is 6,7-dimethyl-8-ribityllumazine synthase.